Here is a 200-residue protein sequence, read N- to C-terminus: MGGKWSKSSIVGWPNVRERMRAAEGVGKVSQDLDKHGAITSSNTRATNADLAWLEAQEEEVGFPVRPQVPLRPMTYKAAVDLSHFLKEKGGLEGLIYSKKRQEILDLWVYHTQGYFPDWQNYTPGPGIRYPLTLGWCFKLVPVDPEEIEKANEGENNCLLHPISLHGMEDEDREVLRWKFDSSLALRHVARERHPEFYQD.

A lipid anchor (N-myristoyl glycine; by host) is attached at glycine 2. Phosphoserine; by host is present on serine 6. The segment at 58–60 (EEE) is acidic; interacts with host PACS1 and PACS2; stabilizes the interaction of NEF/MHC-I with host AP1M1; necessary for MHC-I internalization. The tract at residues 64 to 73 (PVRPQVPLRP) is SH3-binding; interaction with Src family tyrosine kinases. The PxxP; stabilizes the interaction of NEF/MHC-I with host AP1M1; necessary for MHC-I internalization signature appears at 67-70 (PQVP). The tract at residues 103–119 (EILDLWVYHTQGYFPDW) is mediates dimerization, Nef-PTE1 interaction. Positions 143 to 175 (VDPEEIEKANEGENNCLLHPISLHGMEDEDREV) are binding to ATP6V1H. Residues 159-160 (LL) carry the Dileucine internalization motif; necessary for CD4 internalization motif. Residues 169–170 (ED) carry the Diacidic; necessary for CD4 internalization motif.

It belongs to the lentivirus primate group Nef protein family. In terms of assembly, monomer; cytosolic form. Homodimer; membrane bound form. Interacts with Nef associated p21-activated kinase (PAK2); this interaction activates PAK2. Associates with the Nef-MHC-I-AP1 complex; this complex is required for MHC-I internalization. Interacts (via C-terminus) with host PI3-kinase. Interacts with host PACS1; this interaction seems to be weak. Interacts with host PACS2. Interacts with host LCK and MAPK3; these interactions inhibit the kinase activity of the latter. Interacts with host ATP6V1H; this interaction may play a role in CD4 endocytosis. Associates with the CD4-Nef-AP2 complex; this complex is required for CD4 internalization. Interacts with host AP2 subunit alpha and AP2 subunit sigma2. Interacts with TCR-zeta chain; this interaction up-regulates the Fas ligand (FasL) surface expression. Interacts with host HCK, LYN, and SRC; these interactions activate the Src family kinases. Interacts with MAP3K5; this interaction inhibits the Fas and TNFR-mediated death signals. Interacts with beta-COP and PTE1. Interacts with human RACK1; this increases Nef phosphorylation by PKC. Interacts with TP53; this interaction decreases the half-life of TP53, protecting the infected cell against p53-mediated apoptosis. In terms of processing, the virion-associated Nef proteins are cleaved by the viral protease to release the soluble C-terminal core protein. Nef is probably cleaved concomitantly with viral structural proteins on maturation of virus particles. Myristoylated. Post-translationally, phosphorylated on serine residues, probably by host PKCdelta and theta.

The protein localises to the host cell membrane. It localises to the virion. The protein resides in the secreted. Its subcellular location is the host Golgi apparatus membrane. In terms of biological role, factor of infectivity and pathogenicity, required for optimal virus replication. Alters numerous pathways of T-lymphocyte function and down-regulates immunity surface molecules in order to evade host defense and increase viral infectivity. Alters the functionality of other immunity cells, like dendritic cells, monocytes/macrophages and NK cells. Functionally, in infected CD4(+) T-lymphocytes, down-regulates the surface MHC-I, mature MHC-II, CD4, CD28, CCR5 and CXCR4 molecules. Mediates internalization and degradation of host CD4 through the interaction of with the cytoplasmic tail of CD4, the recruitment of AP-2 (clathrin adapter protein complex 2), internalization through clathrin coated pits, and subsequent transport to endosomes and lysosomes for degradation. Diverts host MHC-I molecules to the trans-Golgi network-associated endosomal compartments by an endocytic pathway to finally target them for degradation. MHC-I down-regulation may involve AP-1 (clathrin adapter protein complex 1) or possibly Src family kinase-ZAP70/Syk-PI3K cascade recruited by PACS2. In consequence infected cells are masked for immune recognition by cytotoxic T-lymphocytes. Decreasing the number of immune receptors also prevents reinfection by more HIV particles (superinfection). Down-regulates host SERINC3 and SERINC5 thereby excluding these proteins from the viral particles. Virion infectivity is drastically higher when SERINC3 or SERINC5 are excluded from the viral envelope, because these host antiviral proteins impair the membrane fusion event necessary for subsequent virion penetration. Bypasses host T-cell signaling by inducing a transcriptional program nearly identical to that of anti-CD3 cell activation. Interaction with TCR-zeta chain up-regulates the Fas ligand (FasL). Increasing surface FasL molecules and decreasing surface MHC-I molecules on infected CD4(+) cells send attacking cytotoxic CD8+ T-lymphocytes into apoptosis. Its function is as follows. Plays a role in optimizing the host cell environment for viral replication without causing cell death by apoptosis. Protects the infected cells from apoptosis in order to keep them alive until the next virus generation is ready to strike. Inhibits the Fas and TNFR-mediated death signals by blocking MAP3K5/ASK1. Decreases the half-life of TP53, protecting the infected cell against p53-mediated apoptosis. Inhibits the apoptotic signals regulated by the Bcl-2 family proteins through the formation of a Nef/PI3-kinase/PAK2 complex that leads to activation of PAK2 and induces phosphorylation of host BAD. In terms of biological role, extracellular Nef protein targets CD4(+) T-lymphocytes for apoptosis by interacting with CXCR4 surface receptors. The sequence is that of Protein Nef from Human immunodeficiency virus type 1 group M subtype F2 (isolate MP255) (HIV-1).